A 1110-amino-acid polypeptide reads, in one-letter code: Envelopment polyprotein (1110 aa).

The propeptide occupies 1-8; sequence MALKETDA. Residues 1-290 lie on the Lumenal side of the membrane; that stretch reads MALKETDAKI…KYSKNIYKQT (290 aa). Residues 14–16 carry the Cell attachment site motif; it reads RGD. 2 N-linked (GlcNAc...) asparagine; by host glycosylation sites follow: asparagine 46 and asparagine 92. Intrachain disulfides connect cysteine 90-cysteine 121 and cysteine 98-cysteine 132. Residues 153–171 are non-covalent dimerization; sequence IDNKRKLSIGTKFYIIESL. A glycan (N-linked (GlcNAc...) asparagine; by host) is linked at asparagine 186. Cysteine 200 and cysteine 261 are joined by a disulfide. Residues 291-342 form a helical membrane-spanning segment; it reads ACINFSWFRLIMIALIVYFPIRYLVNKTSKTLFYGYDLLGLITYPILLLINY. The Cytoplasmic portion of the chain corresponds to 343 to 459; the sequence is LWSYFPLKCK…VPGCDRFVTN (117 aa). The Lumenal segment spans residues 460–1044; the sequence is RYDKCPEKDQ…HFGSFFDTVR (585 aa). Residues asparagine 566, asparagine 582, and asparagine 957 are each glycosylated (N-linked (GlcNAc...) asparagine; by host). A helical membrane pass occupies residues 1045–1065; the sequence is VVLLILFVFALAYLCSIVATM. At 1066–1110 the chain is on the cytoplasmic side; it reads CRGYVRNKSYKTKYIEDTNDYSLVSTSSGKDTITRRRPPLDFSGI. A disordered region spans residues 1091–1110; that stretch reads TSSGKDTITRRRPPLDFSGI.

Belongs to the tospovirus envelope glycoprotein family. Homodimer; disulfide-linked. Heterodimer with Glycoprotein C. Interacts with nucleoprotein. As to quaternary structure, heterodimer with Glycoprotein N. Interacts with nucleoprotein. In terms of processing, specific enzymatic cleavages in vivo yield mature proteins including Glycoprotein N and Glycoprotein C. Post-translationally, glycosylated with O-linked glycans. Glycosylation is essential for proper subcellular location. Cleaved at acidic pH.

The protein localises to the virion membrane. It is found in the host Golgi apparatus membrane. Its subcellular location is the host endoplasmic reticulum membrane. Functionally, forms the spikes present at the surface of the virion together with Glycoprotein C. They are able to attach the virion to a cell receptor and to promote fusion of membranes after endocytosis of the virion. Plays a role in virus binding and/or entry into the vector midgut. In terms of biological role, forms the spikes present at the surface of the virion together with Glycoprotein N. They are able to attach the virion to a cell receptor and to promote fusion of membranes after endocytosis of the virion. Probable class II fusion protein. The chain is Envelopment polyprotein (GP) from Impatiens necrotic spot virus (INSV).